The sequence spans 77 residues: Ras-related C3 botulinum toxin substrate 1 (77 aa).

22–24 (KLD) is a binding site for GTP. A Glycyl lysine isopeptide (Lys-Gly) (interchain with G-Cter in ubiquitin) cross-link involves residue Lys53. 65 to 66 (AL) provides a ligand contact to GTP.

Belongs to the small GTPase superfamily. Rho family. As to quaternary structure, interacts with NISCH. Interacts with PIP5K1A. Interacts with the GTP-bound form of RAB7A. Interacts with SRGAP2. Interacts with CYFIP1/SRA-1. Interacts with PLXNB3. Interacts with ARHGDIA; the interaction is induced by SEMA5A, mediated through PLXNB3 and inactivates and stabilizes RAC1. Interacts (GTP-bound form preferentially) with PKN2 (via the REM repeats); the interaction stimulates autophosphorylation and phosphorylation of PKN2. Interacts with the GEF proteins PREX1, RASGRF2, FARP1, FARP2, DOCK1, DOCK2 and DOCK7, which promote the exchange between GDP and GTP, and therefore activate it. Interacts with PARD6A, PARD6B and PARD6G in a GTP-dependent manner. Part of a quaternary complex containing PARD3, some PARD6 protein (PARD6A, PARD6B or PARD6G) and some atypical PKC protein (PRKCI or PRKCZ), which plays a central role in epithelial cell polarization. Found in a trimeric complex composed of DOCK1 and ELMO1, which plays a central role in phagocytosis of apoptotic cells. Interacts with RALBP1 via its effector domain. Interacts with PLXNB1. Part of a complex with MAP2K3, MAP3K3, CCM2 and DEF6. Interacts with BAIAP2, BAIAP2L1 and DEF6. Interacts with Y.pseudotuberculosis YPKA and PLCB2. Interacts with NOXA1. Interacts with ARHGEF2. Interacts with TBC1D2. Interacts with UNKL. Interacts with USP6. Interacts with SPATA13. Interacts with ARHGEF16; mediates activation of RAC1 by EPHA2. Interacts with ITGB4. Interacts with S100A8 and calprotectin (S100A8/9). Interacts with PACSIN2. Interacts (when active) with PPP5C (via TPR repeats); activates PPP5C phosphatase activity and translocates PPP5C to the cell membrane. Interacts with RAPH1 (via Ras associating and PH domains). Interacts with MTSS2 (via IMD domain); this interaction may be important to potentiate PDGF-induced RAC1 activation. Interacts with PAK2. Interacts (GTP-bound form) with SH3RF1 and SH3RF3. Found in a complex with SH3RF1, MAPK8IP1/JIP1, MAP3K11/MLK3, MAP2K7/MKK7 and MAPK8/JNK1. Interacts (both active GTP- or inactive GDP-bound forms) with SH3RF2. Interacts (GTP-bound form preferentially) with CYRIB. Interacts with DOCK4 (via DOCKER domain); functions as a guanine nucleotide exchange factor (GEF) for RAC1. Interacts with GARRE1. Interacts with RAP1GDS1. May interact with ARHGAP36. Interacts with DSG3; the interaction is required for DSG3 translocation to cell-cell junctions, organization of cortical F-actin bundles and actin anchoring at cell-cell junctions. Component of the phagocyte NADPH oxidase complex composed of an obligatory core heterodimer formed by the membrane proteins CYBA and CYBB and the cytosolic regulatory subunits NCF1/p47-phox, NCF2/p67-phox, NCF4/p40-phox and the small GTPase RAC1 or RAC2. Interacts with NCF2. Post-translationally, the N-terminus is blocked. In terms of processing, GTP-bound active form is ubiquitinated by HACE1, leading to its degradation by the proteasome.

It localises to the cytoplasm. The protein localises to the membrane. The protein resides in the melanosome. Its subcellular location is the cell projection. It is found in the lamellipodium. It localises to the dendrite. The protein localises to the synapse. The protein resides in the nucleus. It carries out the reaction GTP + H2O = GDP + phosphate + H(+). Regulated by guanine nucleotide exchange factors (GEFs) which promote the exchange of bound GDP for free GTP, GTPase activating proteins (GAPs) which increase the GTP hydrolysis activity, and GDP dissociation inhibitors which inhibit the dissociation of the nucleotide from the GTPase. GTP hydrolysis is stimulated by ARHGAP30. Its function is as follows. Plasma membrane-associated small GTPase which cycles between active GTP-bound and inactive GDP-bound states. In its active state, binds to a variety of effector proteins to regulate cellular responses such as secretory processes, phagocytosis of apoptotic cells, epithelial cell polarization, neurons adhesion, migration and differentiation, and growth-factor induced formation of membrane ruffles. Rac1 p21/rho GDI heterodimer is the active component of the cytosolic factor sigma 1, which is involved in stimulation of the NADPH oxidase activity in macrophages. Essential for the SPATA13-mediated regulation of cell migration and adhesion assembly and disassembly. Stimulates PKN2 kinase activity. In concert with RAB7A, plays a role in regulating the formation of RBs (ruffled borders) in osteoclasts. In podocytes, promotes nuclear shuttling of NR3C2; this modulation is required for a proper kidney functioning. Required for atypical chemokine receptor ACKR2-induced LIMK1-PAK1-dependent phosphorylation of cofilin (CFL1) and for up-regulation of ACKR2 from endosomal compartment to cell membrane, increasing its efficiency in chemokine uptake and degradation. In neurons, is involved in dendritic spine formation and synaptic plasticity. In hippocampal neurons, involved in spine morphogenesis and synapse formation, through local activation at synapses by guanine nucleotide exchange factors (GEFs), such as ARHGEF6/ARHGEF7/PIX. In synapses, seems to mediate the regulation of F-actin cluster formation performed by SHANK3. In neurons, plays a crucial role in regulating GABA(A) receptor synaptic stability and hence GABAergic inhibitory synaptic transmission through its role in PAK1 activation and eventually F-actin stabilization. Required for DSG3 translocation to cell-cell junctions, DSG3-mediated organization of cortical F-actin bundles and anchoring of actin at cell junctions; via interaction with DSG3. Subunit of the phagocyte NADPH oxidase complex that mediates the transfer of electrons from cytosolic NADPH to O2 to produce the superoxide anion (O2(-)). The polypeptide is Ras-related C3 botulinum toxin substrate 1 (Cavia porcellus (Guinea pig)).